Consider the following 92-residue polypeptide: Small ribosomal subunit protein bS18 (92 aa).

Belongs to the bacterial ribosomal protein bS18 family. As to quaternary structure, part of the 30S ribosomal subunit. Forms a tight heterodimer with protein bS6.

In terms of biological role, binds as a heterodimer with protein bS6 to the central domain of the 16S rRNA, where it helps stabilize the platform of the 30S subunit. The protein is Small ribosomal subunit protein bS18 of Cupriavidus necator (strain ATCC 17699 / DSM 428 / KCTC 22496 / NCIMB 10442 / H16 / Stanier 337) (Ralstonia eutropha).